The primary structure comprises 224 residues: Acyl-protein thioesterase 1 (224 aa).

Catalysis depends on charge relay system residues serine 116, aspartate 170, and histidine 203.

Belongs to the AB hydrolase superfamily. AB hydrolase 2 family.

The protein resides in the cytoplasm. Its subcellular location is the nucleus. It catalyses the reaction S-hexadecanoyl-L-cysteinyl-[protein] + H2O = L-cysteinyl-[protein] + hexadecanoate + H(+). Its function is as follows. Hydrolyzes fatty acids from S-acylated cysteine residues in proteins with a strong preference for palmitoylated G-alpha proteins over other acyl substrates. Mediates the deacylation of G-alpha proteins such as GPA1 in vivo, but has weak or no activity toward palmitoylated Ras proteins. Has weak lysophospholipase activity in vitro; however such activity may not exist in vivo. This chain is Acyl-protein thioesterase 1, found in Schizosaccharomyces pombe (strain 972 / ATCC 24843) (Fission yeast).